The following is a 412-amino-acid chain: Imidazolonepropionase (412 aa).

The Fe(3+) site is built by His73 and His75. Residues His73 and His75 each contribute to the Zn(2+) site. Arg82, Tyr145, and His178 together coordinate 4-imidazolone-5-propanoate. N-formimidoyl-L-glutamate is bound at residue Tyr145. Fe(3+) is bound at residue His247. A Zn(2+)-binding site is contributed by His247. Gln250 is a binding site for 4-imidazolone-5-propanoate. Asp322 serves as a coordination point for Fe(3+). Asp322 contacts Zn(2+). Residues Asn324 and Gly326 each coordinate N-formimidoyl-L-glutamate. Ser327 contacts 4-imidazolone-5-propanoate.

The protein belongs to the metallo-dependent hydrolases superfamily. HutI family. Requires Zn(2+) as cofactor. Fe(3+) is required as a cofactor.

It localises to the cytoplasm. It catalyses the reaction 4-imidazolone-5-propanoate + H2O = N-formimidoyl-L-glutamate. It functions in the pathway amino-acid degradation; L-histidine degradation into L-glutamate; N-formimidoyl-L-glutamate from L-histidine: step 3/3. Catalyzes the hydrolytic cleavage of the carbon-nitrogen bond in imidazolone-5-propanoate to yield N-formimidoyl-L-glutamate. It is the third step in the universal histidine degradation pathway. The chain is Imidazolonepropionase from Shewanella amazonensis (strain ATCC BAA-1098 / SB2B).